Consider the following 122-residue polypeptide: S-adenosylmethionine decarboxylase proenzyme (122 aa).

Catalysis depends on serine 63, which acts as the Schiff-base intermediate with substrate; via pyruvic acid. Residue serine 63 is modified to Pyruvic acid (Ser); by autocatalysis. The active-site Proton acceptor; for processing activity is histidine 68. Residue cysteine 83 is the Proton donor; for catalytic activity of the active site.

It belongs to the prokaryotic AdoMetDC family. Type 1 subfamily. As to quaternary structure, heterotetramer of two alpha and two beta chains arranged as a dimer of alpha/beta heterodimers. The cofactor is pyruvate. In terms of processing, is synthesized initially as an inactive proenzyme. Formation of the active enzyme involves a self-maturation process in which the active site pyruvoyl group is generated from an internal serine residue via an autocatalytic post-translational modification. Two non-identical subunits are generated from the proenzyme in this reaction, and the pyruvate is formed at the N-terminus of the alpha chain, which is derived from the carboxyl end of the proenzyme. The post-translation cleavage follows an unusual pathway, termed non-hydrolytic serinolysis, in which the side chain hydroxyl group of the serine supplies its oxygen atom to form the C-terminus of the beta chain, while the remainder of the serine residue undergoes an oxidative deamination to produce ammonia and the pyruvoyl group blocking the N-terminus of the alpha chain.

It carries out the reaction S-adenosyl-L-methionine + H(+) = S-adenosyl 3-(methylsulfanyl)propylamine + CO2. It functions in the pathway amine and polyamine biosynthesis; S-adenosylmethioninamine biosynthesis; S-adenosylmethioninamine from S-adenosyl-L-methionine: step 1/1. Catalyzes the decarboxylation of S-adenosylmethionine to S-adenosylmethioninamine (dcAdoMet), the propylamine donor required for the synthesis of the polyamines spermine and spermidine from the diamine putrescine. This chain is S-adenosylmethionine decarboxylase proenzyme, found in Methanococcus maripaludis (strain DSM 14266 / JCM 13030 / NBRC 101832 / S2 / LL).